A 1883-amino-acid chain; its full sequence is Endoribonuclease Dicer homolog 1 (1883 aa).

Disordered regions lie at residues alanine 71–proline 97, alanine 129–arginine 188, and arginine 221–valine 262. Residues proline 75–leucine 96 are compositionally biased toward pro residues. Composition is skewed to basic and acidic residues over residues alanine 129 to histidine 138 and glutamate 228 to valine 262. In terms of domain architecture, Helicase ATP-binding spans valine 274 to asparagine 413. Leucine 287–threonine 294 is an ATP binding site. Positions aspartate 358 to histidine 361 match the DECH box motif. The segment at lysine 577–serine 604 is disordered. Positions leucine 629–threonine 789 constitute a Helicase C-terminal domain. Residues alanine 817–glutamate 912 enclose the Dicer dsRNA-binding fold domain. A disordered region spans residues threonine 901–arginine 928. The segment covering glycine 907–glutamine 916 has biased composition (basic and acidic residues). The 134-residue stretch at histidine 1163 to proline 1296 folds into the PAZ domain. 2 consecutive RNase III domains span residues leucine 1320–glycine 1498 and phenylalanine 1538–glycine 1686. Mg(2+)-binding residues include glutamate 1576, aspartate 1672, and glutamate 1675. DRBM domains follow at residues histidine 1712–glutamate 1775 and phenylalanine 1797–arginine 1872.

It belongs to the helicase family. Dicer subfamily. May interact with ARGONAUTE1 or PINHEAD through their common PAZ domains. The cofactor is Mg(2+). Mn(2+) is required as a cofactor.

It localises to the nucleus. Functionally, involved in the RNA silencing pathway. Cleaves double-stranded RNA to produce microRNAs (miRNAs) of 21-24 nucleotides which target the selective destruction of complementary RNAs. Regulates by this way the development of the plant. May not be involved in small interfering RNAs (siRNAs) production. The polypeptide is Endoribonuclease Dicer homolog 1 (DCL1) (Oryza sativa subsp. japonica (Rice)).